A 143-amino-acid polypeptide reads, in one-letter code: Putative pre-16S rRNA nuclease (143 aa).

The protein belongs to the YqgF nuclease family.

The protein resides in the cytoplasm. Its function is as follows. Could be a nuclease involved in processing of the 5'-end of pre-16S rRNA. The protein is Putative pre-16S rRNA nuclease of Leuconostoc mesenteroides subsp. mesenteroides (strain ATCC 8293 / DSM 20343 / BCRC 11652 / CCM 1803 / JCM 6124 / NCDO 523 / NBRC 100496 / NCIMB 8023 / NCTC 12954 / NRRL B-1118 / 37Y).